A 917-amino-acid chain; its full sequence is Hexokinase-2 (917 aa).

At M1 the chain carries N-acetylmethionine. Residues 1 to 16 (MIASHLLAYFFTELNH) are mitochondrial-binding peptide (MBP). 2 consecutive Hexokinase domains span residues 16–458 (HDQV…MVTA) and 464–906 (AYQH…LITA). ATP is bound by residues R30 and 84-89 (DLGGTN). The hexokinase small subdomain 1 stretch occupies residues 73 to 207 (DGTEHGEFLA…DFDIDIVAMV (135 aa)). Residue 84–88 (DLGGT) participates in D-glucose 6-phosphate binding. Residues 155–156 (SF), 172–173 (TK), 208–209 (ND), N235, E260, and 291–294 (QLFE) contribute to the D-glucose site. A hexokinase large subdomain 1 region spans residues 208 to 447 (NDTVATMMTC…CDIRFLCSED (240 aa)). D209 provides a ligand contact to D-glucose 6-phosphate. A D-glucose 6-phosphate-binding site is contributed by 413 to 415 (DGS). Residue 425–426 (KR) coordinates ATP. D-glucose 6-phosphate-binding positions include S449 and 532–536 (DLGGT). The hexokinase small subdomain 2 stretch occupies residues 521–655 (DGTEKGDFLA…EFDLDVVAVV (135 aa)). Residue 532–537 (DLGGTN) participates in ATP binding. D-glucose contacts are provided by residues 603–604 (SF), 620–621 (TK), and 656–657 (ND). Residues 656–895 (NDTVGTMMTC…CDVSFLESED (240 aa)) form a hexokinase large subdomain 2 region. Positions 657 and 680 each coordinate D-glucose 6-phosphate. T680 serves as a coordination point for ATP. D-glucose-binding positions include 682–683 (SN), E708, and 739–742 (QRFE). ATP contacts are provided by residues 747–748 (GM), 784–788 (TKFLS), and 863–867 (TLYKL). Residues 861–863 (DGT) and S897 each bind D-glucose 6-phosphate.

It belongs to the hexokinase family. Monomer. Interacts with TIGAR; the interaction increases hexokinase activity in a hypoxia- and HIF1A-dependent manner.

It localises to the mitochondrion outer membrane. The protein localises to the cytoplasm. The protein resides in the cytosol. The catalysed reaction is a D-hexose + ATP = a D-hexose 6-phosphate + ADP + H(+). It carries out the reaction D-fructose + ATP = D-fructose 6-phosphate + ADP + H(+). It catalyses the reaction D-glucose + ATP = D-glucose 6-phosphate + ADP + H(+). Its pathway is carbohydrate metabolism; hexose metabolism. It participates in carbohydrate degradation; glycolysis; D-glyceraldehyde 3-phosphate and glycerone phosphate from D-glucose: step 1/4. Hexokinase activity is specifically inhibited by 2,6-disubstituted glucosamines. Its function is as follows. Catalyzes the phosphorylation of hexose, such as D-glucose and D-fructose, to hexose 6-phosphate (D-glucose 6-phosphate and D-fructose 6-phosphate, respectively). Mediates the initial step of glycolysis by catalyzing phosphorylation of D-glucose to D-glucose 6-phosphate. Plays a key role in maintaining the integrity of the outer mitochondrial membrane by preventing the release of apoptogenic molecules from the intermembrane space and subsequent apoptosis. The sequence is that of Hexokinase-2 from Equus zebra (Mountain zebra).